The primary structure comprises 215 residues: ATP-dependent dethiobiotin synthetase BioD (215 aa).

13–18 (DIGKTI) contacts ATP. A Mg(2+)-binding site is contributed by Thr17. Residue Lys38 is part of the active site. Thr42 contributes to the substrate binding site. ATP is bound by residues Asp50, 115–118 (EGAG), and 175–176 (NH). Residues Asp50 and Glu115 each coordinate Mg(2+).

The protein belongs to the dethiobiotin synthetase family. In terms of assembly, homodimer. Mg(2+) serves as cofactor.

The protein resides in the cytoplasm. The enzyme catalyses (7R,8S)-7,8-diammoniononanoate + CO2 + ATP = (4R,5S)-dethiobiotin + ADP + phosphate + 3 H(+). It participates in cofactor biosynthesis; biotin biosynthesis; biotin from 7,8-diaminononanoate: step 1/2. In terms of biological role, catalyzes a mechanistically unusual reaction, the ATP-dependent insertion of CO2 between the N7 and N8 nitrogen atoms of 7,8-diaminopelargonic acid (DAPA, also called 7,8-diammoniononanoate) to form a ureido ring. The chain is ATP-dependent dethiobiotin synthetase BioD from Neisseria meningitidis serogroup A / serotype 4A (strain DSM 15465 / Z2491).